Consider the following 240-residue polypeptide: Biosynthetic peptidoglycan transglycosylase (240 aa).

The chain crosses the membrane as a helical span at residues 9-31; it reads FLNVVKWFAIASVLLVLLFRVVP.

The protein belongs to the glycosyltransferase 51 family.

The protein resides in the cell inner membrane. It carries out the reaction [GlcNAc-(1-&gt;4)-Mur2Ac(oyl-L-Ala-gamma-D-Glu-L-Lys-D-Ala-D-Ala)](n)-di-trans,octa-cis-undecaprenyl diphosphate + beta-D-GlcNAc-(1-&gt;4)-Mur2Ac(oyl-L-Ala-gamma-D-Glu-L-Lys-D-Ala-D-Ala)-di-trans,octa-cis-undecaprenyl diphosphate = [GlcNAc-(1-&gt;4)-Mur2Ac(oyl-L-Ala-gamma-D-Glu-L-Lys-D-Ala-D-Ala)](n+1)-di-trans,octa-cis-undecaprenyl diphosphate + di-trans,octa-cis-undecaprenyl diphosphate + H(+). It participates in cell wall biogenesis; peptidoglycan biosynthesis. Its function is as follows. Peptidoglycan polymerase that catalyzes glycan chain elongation from lipid-linked precursors. The sequence is that of Biosynthetic peptidoglycan transglycosylase from Pseudomonas fluorescens (strain SBW25).